The sequence spans 68 residues: 1-carboxybiuret hydrolase subunit AtzG (68 aa).

Heterotetramer consisting of 2 AtzE and 2 AtzG subunits.

It functions in the pathway xenobiotic degradation; atrazine degradation. Its function is as follows. Important for the activity of the AtzE subunit of 1-carboxybiuret hydrolase. This is 1-carboxybiuret hydrolase subunit AtzG from Pseudomonas sp. (strain ADP).